A 101-amino-acid polypeptide reads, in one-letter code: Small ribosomal subunit protein uS14 (101 aa).

Positions 1-10 are enriched in basic and acidic residues; that stretch reads MAKNSMVERD. The interval 1-20 is disordered; the sequence is MAKNSMVERDRKRRKLAQKY.

The protein belongs to the universal ribosomal protein uS14 family. As to quaternary structure, part of the 30S ribosomal subunit. Contacts proteins S3 and S10.

Its function is as follows. Binds 16S rRNA, required for the assembly of 30S particles and may also be responsible for determining the conformation of the 16S rRNA at the A site. This Halorhodospira halophila (strain DSM 244 / SL1) (Ectothiorhodospira halophila (strain DSM 244 / SL1)) protein is Small ribosomal subunit protein uS14.